The primary structure comprises 857 residues: Protein STICHEL-like 2 (857 aa).

Glycine 280–threonine 287 provides a ligand contact to ATP. Residues cysteine 299, cysteine 309, cysteine 312, and cysteine 315 each contribute to the Zn(2+) site. Residues leucine 544–glutamine 576 adopt a coiled-coil conformation. Disordered regions lie at residues serine 593–lysine 629 and alanine 787–leucine 845. Residues glutamate 599–glutamate 610 show a composition bias toward basic and acidic residues. Residues glutamine 834 to serine 843 are compositionally biased toward polar residues.

It belongs to the DnaX/STICHEL family.

This Arabidopsis thaliana (Mouse-ear cress) protein is Protein STICHEL-like 2.